We begin with the raw amino-acid sequence, 321 residues long: 5,10-methylenetetrahydromethanopterin reductase (321 aa).

The protein belongs to the mer family. In terms of assembly, homotetramer.

The protein localises to the cytoplasm. The catalysed reaction is 5-methyl-5,6,7,8-tetrahydromethanopterin + oxidized coenzyme F420-(gamma-L-Glu)(n) + H(+) = 5,10-methylenetetrahydromethanopterin + reduced coenzyme F420-(gamma-L-Glu)(n). Its pathway is one-carbon metabolism; methanogenesis from CO(2); methyl-coenzyme M from 5,10-methylene-5,6,7,8-tetrahydromethanopterin: step 1/2. Catalyzes the reversible reduction of methylene-H(4)MPT to methyl-H(4)MPT. The protein is 5,10-methylenetetrahydromethanopterin reductase of Methanothermobacter marburgensis (strain ATCC BAA-927 / DSM 2133 / JCM 14651 / NBRC 100331 / OCM 82 / Marburg) (Methanobacterium thermoautotrophicum).